Consider the following 738-residue polypeptide: Putative RNA-binding protein EEED8.10 (738 aa).

The region spanning 112–201 (RKIVVSNISA…QVMVVSAYVS (90 aa)) is the RRM domain. Residues 211–237 (LSDDVGSREDTPLSRASSTQSLASGSE) form a disordered region. Over residues 224–237 (SRASSTQSLASGSE) the composition is skewed to polar residues. In terms of domain architecture, F-box spans 239-297 (SFNLGNVPDKILRRVISFLPIHETIRLERVNKKFMEESIKSWELVNKIALARETVFNKQ).

In Caenorhabditis elegans, this protein is Putative RNA-binding protein EEED8.10.